Here is a 608-residue protein sequence, read N- to C-terminus: Aspartate--tRNA(Asp/Asn) ligase (608 aa).

Position 179 (glutamate 179) interacts with L-aspartate. Positions 203 to 206 (QLFK) are aspartate. Residue arginine 225 participates in L-aspartate binding. Residues 225–227 (RDE) and glutamine 234 contribute to the ATP site. L-aspartate is bound at residue histidine 461. Glutamate 494 contributes to the ATP binding site. Arginine 501 is an L-aspartate binding site. 546 to 549 (GLDR) contributes to the ATP binding site.

Belongs to the class-II aminoacyl-tRNA synthetase family. Type 1 subfamily. Homodimer.

Its subcellular location is the cytoplasm. The catalysed reaction is tRNA(Asx) + L-aspartate + ATP = L-aspartyl-tRNA(Asx) + AMP + diphosphate. Its function is as follows. Aspartyl-tRNA synthetase with relaxed tRNA specificity since it is able to aspartylate not only its cognate tRNA(Asp) but also tRNA(Asn). Reaction proceeds in two steps: L-aspartate is first activated by ATP to form Asp-AMP and then transferred to the acceptor end of tRNA(Asp/Asn). This Psychrobacter arcticus (strain DSM 17307 / VKM B-2377 / 273-4) protein is Aspartate--tRNA(Asp/Asn) ligase.